The sequence spans 488 residues: Probable aldehyde dehydrogenase (488 aa).

240–245 is a binding site for NAD(+); the sequence is GSSVTG. Active-site residues include Glu262 and Cys296.

Belongs to the aldehyde dehydrogenase family.

The enzyme catalyses an aldehyde + NAD(+) + H2O = a carboxylate + NADH + 2 H(+). Functionally, involved in an alpha-terpineol oxidation system. This is Probable aldehyde dehydrogenase (terPE) from Pseudomonas sp.